A 171-amino-acid chain; its full sequence is Actin-related protein 2/3 complex subunit 4 (171 aa).

It belongs to the ARPC4 family. Component of the Arp2/3 complex composed of ARP2, ARP3, ARC40/p41-ARC, ARC35/p34-ARC, ARC18/p21-ARC, ARC19/p20-ARC and ARC16/p16-ARC.

Its subcellular location is the cytoplasm. It is found in the cytoskeleton. It localises to the actin patch. Functions as actin-binding component of the Arp2/3 complex which is involved in regulation of actin polymerization and together with an activating nucleation-promoting factor (NPF) mediates the formation of branched actin networks. Seems to contact the mother actin filament. This is Actin-related protein 2/3 complex subunit 4 (ARC19) from Saccharomyces cerevisiae (strain ATCC 204508 / S288c) (Baker's yeast).